The following is a 68-amino-acid chain: Large ribosomal subunit protein uL29 (68 aa).

The protein belongs to the universal ribosomal protein uL29 family.

This is Large ribosomal subunit protein uL29 from Wigglesworthia glossinidia brevipalpis.